A 569-amino-acid polypeptide reads, in one-letter code: Acetate/butyrate--CoA ligase AAE7, peroxisomal (569 aa).

Positions 567-569 (SRL) match the Microbody targeting signal motif.

This sequence belongs to the ATP-dependent AMP-binding enzyme family. Expressed in roots, leaves, stems, flowers and developing seeds.

It is found in the peroxisome. It catalyses the reaction acetate + ATP + CoA = acetyl-CoA + AMP + diphosphate. The catalysed reaction is a medium-chain fatty acid + ATP + CoA = a medium-chain fatty acyl-CoA + AMP + diphosphate. Its function is as follows. Peroxisomal acetate/butyrate--CoA ligase that is probably involved in the activation of exogenous acetate for entry into the glyoxylate cycle. May play a role to prevent carbon loss from peroxisomes during lipid mobilization. In vitro, is active with both acetate and butyrate. In Arabidopsis thaliana (Mouse-ear cress), this protein is Acetate/butyrate--CoA ligase AAE7, peroxisomal (AAE7).